The primary structure comprises 211 residues: PITH domain-containing protein GA19395 (211 aa).

In terms of domain architecture, PITH spans 20 to 192 (DHALEMGIEY…GVTICNYEAR (173 aa)).

This sequence belongs to the PITHD1 family.

The polypeptide is PITH domain-containing protein GA19395 (Drosophila pseudoobscura pseudoobscura (Fruit fly)).